Consider the following 360-residue polypeptide: Glycerol-3-phosphate dehydrogenase [NAD(+)], cytoplasmic (360 aa).

Residues 11–16, Phe98, Lys121, and Ala155 contribute to the NAD(+) site; that span reads GSGNWG. Lys121 provides a ligand contact to substrate. Lys206 (proton acceptor) is an active-site residue. Residues Arg270 and Gln299 each contribute to the NAD(+) site. Position 270-271 (270-271) interacts with substrate; sequence RN.

The protein belongs to the NAD-dependent glycerol-3-phosphate dehydrogenase family. In terms of assembly, homodimer.

It localises to the cytoplasm. The catalysed reaction is sn-glycerol 3-phosphate + NAD(+) = dihydroxyacetone phosphate + NADH + H(+). It functions in the pathway phospholipid metabolism; alpha-glycerophosphate cycle. The chain is Glycerol-3-phosphate dehydrogenase [NAD(+)], cytoplasmic (Gpdh1) from Drosophila kanekoi (Fruit fly).